The chain runs to 691 residues: UvrABC system protein C (691 aa).

The GIY-YIG domain occupies 20 to 97 (STSGVYLWKD…IKKHTPRYNI (78 aa)). Positions 204-239 (DATVARLEKRMKRAVRQEAFEAAARIRDDIQAIRCI) constitute a UVR domain. The interval 662–691 (RSTTAPVREEYKEHEHDPQGESPGPGRKTD) is disordered. The span at 668 to 680 (VREEYKEHEHDPQ) shows a compositional bias: basic and acidic residues.

The protein belongs to the UvrC family. In terms of assembly, interacts with UvrB in an incision complex.

Its subcellular location is the cytoplasm. Functionally, the UvrABC repair system catalyzes the recognition and processing of DNA lesions. UvrC both incises the 5' and 3' sides of the lesion. The N-terminal half is responsible for the 3' incision and the C-terminal half is responsible for the 5' incision. This Treponema pallidum (strain Nichols) protein is UvrABC system protein C.